Consider the following 922-residue polypeptide: Translation initiation factor IF-2 (922 aa).

Positions 243–329 (AAREAAKLAE…GKSKSGQEET (87 aa)) are disordered. Over residues 250–264 (LAEAQKAAAPAPAAP) the composition is skewed to low complexity. Positions 267 to 298 (KTLHKPDKPAAAKGAKGPDKKPAGAWKDDAAR) are enriched in basic and acidic residues. Residues 422–589 (ARPPVVTVMG…AILLQAEVLE (168 aa)) enclose the tr-type G domain. Residues 431-438 (GHVDHGKT) form a G1 region. 431–438 (GHVDHGKT) is a binding site for GTP. The segment at 456–460 (GITQH) is G2. The interval 477–480 (DTPG) is G3. GTP-binding positions include 477–481 (DTPGH) and 531–534 (NKID). The G4 stretch occupies residues 531–534 (NKID). A G5 region spans residues 567–569 (SAK).

This sequence belongs to the TRAFAC class translation factor GTPase superfamily. Classic translation factor GTPase family. IF-2 subfamily.

The protein resides in the cytoplasm. In terms of biological role, one of the essential components for the initiation of protein synthesis. Protects formylmethionyl-tRNA from spontaneous hydrolysis and promotes its binding to the 30S ribosomal subunits. Also involved in the hydrolysis of GTP during the formation of the 70S ribosomal complex. The protein is Translation initiation factor IF-2 of Thiobacillus denitrificans (strain ATCC 25259 / T1).